Consider the following 350-residue polypeptide: 3-isopropylmalate dehydrogenase (350 aa).

Residue 76–87 (GPKWDNAPKRPE) participates in NAD(+) binding. Positions 94, 104, 132, and 217 each coordinate substrate. Mg(2+)-binding residues include Asp217, Asp241, and Asp245. 275–287 (GSAPDIANQNIAN) contacts NAD(+).

Belongs to the isocitrate and isopropylmalate dehydrogenases family. LeuB type 1 subfamily. As to quaternary structure, homodimer. The cofactor is Mg(2+). Requires Mn(2+) as cofactor.

The protein resides in the cytoplasm. The enzyme catalyses (2R,3S)-3-isopropylmalate + NAD(+) = 4-methyl-2-oxopentanoate + CO2 + NADH. The protein operates within amino-acid biosynthesis; L-leucine biosynthesis; L-leucine from 3-methyl-2-oxobutanoate: step 3/4. Its function is as follows. Catalyzes the oxidation of 3-carboxy-2-hydroxy-4-methylpentanoate (3-isopropylmalate) to 3-carboxy-4-methyl-2-oxopentanoate. The product decarboxylates to 4-methyl-2 oxopentanoate. The sequence is that of 3-isopropylmalate dehydrogenase from Listeria monocytogenes serovar 1/2a (strain ATCC BAA-679 / EGD-e).